A 103-amino-acid chain; its full sequence is Integration host factor subunit alpha (103 aa).

This sequence belongs to the bacterial histone-like protein family. In terms of assembly, heterodimer of an alpha and a beta chain.

Functionally, this protein is one of the two subunits of integration host factor, a specific DNA-binding protein that functions in genetic recombination as well as in transcriptional and translational control. This is Integration host factor subunit alpha from Aromatoleum aromaticum (strain DSM 19018 / LMG 30748 / EbN1) (Azoarcus sp. (strain EbN1)).